A 200-amino-acid polypeptide reads, in one-letter code: Transcriptional repressor NrdR (200 aa).

Residues 3-34 (CPFCQNPDTKVIDTRISDDGHSIRRRRECPNC) fold into a zinc finger. The ATP-cone domain maps to 46–136 (LLVKKRSGNV…VYQNFEDLED (91 aa)).

It belongs to the NrdR family. The cofactor is Zn(2+).

In terms of biological role, negatively regulates transcription of bacterial ribonucleotide reductase nrd genes and operons by binding to NrdR-boxes. This Bifidobacterium animalis subsp. lactis (strain AD011) protein is Transcriptional repressor NrdR.